The primary structure comprises 985 residues: Regulator of telomere elongation helicase 1 homolog (985 aa).

The Helicase ATP-binding domain maps to 7 to 303 (AGIPVHFPFE…QDMAGDEPKD (297 aa)). ATP is bound at residue 42-49 (SPTGTGKT). [4Fe-4S] cluster contacts are provided by Cys146, Cys164, Cys173, and Cys209. Residues 252–255 (DEAH) carry the DEAH box motif. The interval 863–883 (VKIHKRERSSPTAPESSSQVT) is disordered. The span at 872 to 882 (SPTAPESSSQV) shows a compositional bias: polar residues. Position 874 is a phosphothreonine (Thr874).

Belongs to the helicase family. RAD3/XPD subfamily. As to expression, expressed in both male germline and somatic cells (at protein level). Expressed in ovarian germline stem cells (at protein level). Expressed in adult testes (at protein level). Expressed in the germarium including germline stem cells.

It is found in the nucleus. The protein resides in the chromosome. It catalyses the reaction ATP + H2O = ADP + phosphate + H(+). Functionally, a probable ATP-dependent DNA helicase implicated in DNA repair and the maintenance of genomic stability. Acts as an anti-recombinase to counteract toxic recombination and limit crossover during meiosis. Regulates meiotic recombination and crossover homeostasis by physically dissociating strand invasion events and thereby promotes noncrossover repair by meiotic synthesis dependent strand annealing (SDSA) as well as disassembly of D loop recombination intermediates. In male germline stem cells (GSCs), plays a role in GSCs maintenance during larval germline development by modulating the expression of genes such as Stat92E and preventing DNA damage-induced checkpoint activation. May play a role in female germline stem cell maintenance. The polypeptide is Regulator of telomere elongation helicase 1 homolog (Drosophila melanogaster (Fruit fly)).